Here is a 362-residue protein sequence, read N- to C-terminus: Tyrosine recombinase XerH (362 aa).

The Core-binding (CB) domain occupies 43-140; it reads ECLNELNQAC…ALLGLFSYID (98 aa). Residues 170 to 357 form the Tyr recombinase domain; that stretch reads KLPTHLNNEE…DKQRLEEAAS (188 aa). Catalysis depends on residues arginine 213, lysine 239, histidine 309, arginine 312, and histidine 335. Tyrosine 344 functions as the O-(3'-phospho-DNA)-tyrosine intermediate in the catalytic mechanism.

Belongs to the 'phage' integrase family. XerH subfamily.

It is found in the cytoplasm. Its activity is regulated as follows. FtsK is required for recombination. Its function is as follows. Site-specific tyrosine recombinase, which acts by catalyzing the cutting and rejoining of the recombining DNA molecules. Involved in chromosome segregation. May contribute to chromosome decatenation. In Helicobacter pylori (strain ATCC 700392 / 26695) (Campylobacter pylori), this protein is Tyrosine recombinase XerH.